The following is an 882-amino-acid chain: Molybdenum cofactor sulfurase (882 aa).

K265 is modified (N6-(pyridoxal phosphate)lysine). C425 is an active-site residue. Residues 496–546 (GQPLPLATPGEAGAPPEDSEAQNAVPAARARGSSSPQEDTSPHSGVWNNSP) are disordered. The span at 527 to 546 (GSSSPQEDTSPHSGVWNNSP) shows a compositional bias: polar residues. Phosphoserine is present on residues S528 and S530. The region spanning 707–868 (KQSSDFQRNA…LSVGSQVLPL (162 aa)) is the MOSC domain.

This sequence belongs to the class-V pyridoxal-phosphate-dependent aminotransferase family. MOCOS subfamily. It depends on pyridoxal 5'-phosphate as a cofactor. Ubiquitously expressed.

It catalyses the reaction Mo-molybdopterin + L-cysteine + AH2 = thio-Mo-molybdopterin + L-alanine + A + H2O. Its pathway is cofactor biosynthesis; molybdopterin biosynthesis. Its function is as follows. Sulfurates the molybdenum cofactor. Sulfation of molybdenum is essential for xanthine dehydrogenase (XDH) and aldehyde oxidase (ADO) enzymes in which molybdenum cofactor is liganded by 1 oxygen and 1 sulfur atom in active form. This chain is Molybdenum cofactor sulfurase, found in Bos taurus (Bovine).